The following is a 739-amino-acid chain: Vascular cell adhesion protein 1 (739 aa).

A signal peptide spans 1–24; that stretch reads MPVKMVAIFGASTVLWILFAVSQA. Ig-like C2-type domains follow at residues 25-111, 119-212, 223-309, 312-397, 408-506, 514-595, and 601-682; these read FKIE…IQVD, PEIQ…KERE, PKNT…LIVQ, PFTV…KTIQ, EIEI…QTLY, PTIW…VELI, and KDIQ…RSLT. Residues 25–698 lie on the Extracellular side of the membrane; sequence FKIEISPEYK…ENNKDYFSPE (674 aa). 5 disulfides stabilise this stretch: cysteine 47–cysteine 95, cysteine 52–cysteine 99, cysteine 137–cysteine 195, cysteine 246–cysteine 291, and cysteine 335–cysteine 383. A glycan (N-linked (GlcNAc...) asparagine) is linked at asparagine 273. Residues asparagine 424, asparagine 531, asparagine 561, and asparagine 650 are each glycosylated (N-linked (GlcNAc...) asparagine). Cysteine 534 and cysteine 579 are joined by a disulfide. The chain crosses the membrane as a helical span at residues 699–720; sequence LLALYFASSLVIPAIGMIIYFA. Over 721–739 the chain is Cytoplasmic; it reads RKANMKGSYSLVEAQKSKV.

As to quaternary structure, binds to ECMV-D capsid proteins and acts as a receptor for this virus. Post-translationally, cleaved by the metalloproteinase ADAM17 to generate the soluble form. In terms of processing, sialoglycoprotein. Ubiquitinated by TRIM65 via 'Lys-48'-linked ubiquitination; leading to proteasomal degradation. As to expression, expressed in aortic endothelial cells, with low expression in the descending thoracic aorta and the outer curvature of the aortic arch, where pulsatory shear stress exists, and high in the inner curvature of the aortic arch, where oscillatory shear stress prevails (at protein level). Expressed on inflamed vascular endothelium, as well as on macrophage-like and dendritic cell types in both normal and inflamed tissue.

Its subcellular location is the cell membrane. It is found in the secreted. Cell adhesion glycoprotein predominantly expressed on the surface of endothelial cells that plays an important role in immune surveillance and inflammation. Acts as a major regulator of leukocyte adhesion to the endothelium through interaction with different types of integrins. During inflammatory responses, binds ligands on the surface of activated endothelial cells to initiate the activation of calcium channels and the plasma membrane-associated small GTPase RAC1 leading to leukocyte transendothelial migration. Also serves as a quality-control checkpoint for entry into bone marrow by providing a 'don't-eat-me' stamping in the context of major histocompatibility complex (MHC) class-I presentation. This Rattus norvegicus (Rat) protein is Vascular cell adhesion protein 1 (Vcam1).